Here is a 218-residue protein sequence, read N- to C-terminus: Small ribosomal subunit protein uS3c (218 aa).

A KH type-2 domain is found at 39 to 109 (IRNYVKVNLS…QIRINVTELK (71 aa)).

This sequence belongs to the universal ribosomal protein uS3 family. Part of the 30S ribosomal subunit.

It is found in the plastid. It localises to the chloroplast. This Rhodomonas salina (Cryptomonas salina) protein is Small ribosomal subunit protein uS3c (rps3).